A 1758-amino-acid chain; its full sequence is Y' element ATP-dependent helicase YIL177C (1758 aa).

Residues 668–845 form the Helicase ATP-binding domain; it reads EIYMADTPSV…LQRIGLTGLA (178 aa). Residue 681–688 participates in ATP binding; it reads APPGYGKT. The Helicase C-terminal domain maps to 900–1051; it reads ALKLLLALFE…EFYGLESKKG (152 aa). The span at 1142-1360 shows a compositional bias: low complexity; that stretch reads NVRTNATTNA…ATTTESTNAS (219 aa). The tract at residues 1142–1384 is disordered; the sequence is NVRTNATTNA…RFHPVTDINK (243 aa). Residues 1361 to 1384 show a composition bias toward basic and acidic residues; it reads AKEDANKDGNAEDNRFHPVTDINK.

This sequence belongs to the helicase family. Yeast subtelomeric Y' repeat subfamily.

Catalyzes DNA unwinding and is involved in telomerase-independent telomere maintenance. The chain is Y' element ATP-dependent helicase YIL177C from Saccharomyces cerevisiae (strain ATCC 204508 / S288c) (Baker's yeast).